Consider the following 192-residue polypeptide: CASP-like protein 4C1 (192 aa).

Residues 1–11 are compositionally biased toward polar residues; sequence MRSPQSLRNGE. Residues 1-23 are disordered; sequence MRSPQSLRNGETPSPSPRPPRFP. Residues 1–40 are Cytoplasmic-facing; that stretch reads MRSPQSLRNGETPSPSPRPPRFPTPHFHSTVSLQKLKRFN. The span at 14–23 shows a compositional bias: pro residues; sequence SPSPRPPRFP. The helical transmembrane segment at 41-61 threads the bilayer; sequence LLILVFRLSTFCFSLASSVFM. The Extracellular segment spans residues 62–75; that stretch reads LTNPTWYHFDAFRY. Residues 76–96 traverse the membrane as a helical segment; sequence VFAANAIVAIYSLFEMAASVW. The Cytoplasmic portion of the chain corresponds to 97 to 107; it reads EISRGNTLFPE. The helical transmembrane segment at 108 to 128 threads the bilayer; the sequence is ILQVWFDFGHDQVFAYLLLSA. The Extracellular segment spans residues 129-156; that stretch reads DSAATALAKTLKGGDTCAASNAFCVQSY. The helical transmembrane segment at 157-177 threads the bilayer; sequence IAIALGFAGFLFLGLSSLLSG. Residues 178-192 lie on the Cytoplasmic side of the membrane; the sequence is FRVVCFLINGSRFYV.

Belongs to the Casparian strip membrane proteins (CASP) family. In terms of assembly, homodimer and heterodimers.

The protein localises to the cell membrane. In Ricinus communis (Castor bean), this protein is CASP-like protein 4C1.